Reading from the N-terminus, the 940-residue chain is MSLYSAEDILKWLHHAQAEFLTALAEGDDALAQFQAQWDRVRACVDCDPTLPSSTLALSHAVGISIAQIAEVMLDQEATNHTIEDELTKDLLAGLERHDASSALADEKTGAELSATPLPPYIEPCYRWLVNHLDNPYPTKAIKEELLDQARQRTSPDVAQHLALGDIDNWFIAARARMGWGDIRRRLFGGSRSLMLQSTRLMWGTEETSRDFTDGCIAKRKGAQPKREEVQPHLRSSHDVVAFKIPPKASPYFLITDSSTAACEEPLHPQSFAALQPDVEFALAHLEVNAKEMYGLEPTELADSLNSSAVDRQFATQDLVAFRAALEAATAAKQRQARREQRRAQKDRMDAQRRAEDRKCYPSPEPLSADELSGTESDEDLDDFYASDDASDDEDDDGEDLDTRPSDLMAQMCPQLVATAFSKDGSATEDEDSNSDDTDESTDDEDEDSDSENDSDSEDEEEEDEEEEEPVKIAGAKRGRNDDEEVSPLAKKPRIFSPPVRPRPQAIRVSLPSPAPSSRGSTPTSPVSPSPKAKRPAQATSLLASHPMKKREKLQEELRKAGLAPPSAPVLMGPDGVPLGTVRSRSSPSVSSPPSVSVSLPLPSRGVPSGGIKVTGDPTPWVNWDLEAHTQAPRDLTAATKSSAGCSVDAVPLPGKSRSLTRSPSISSISSACSTSSSGSDTDSLFSVTSDATDITEPDEATTADETTTQSTSASSSRDTTSQQKRMPPLSIDPRFDPALWSKYDLSPPADGRLHPSDGLRPSAFVPTKLDVRVANLAQNPARHWSASKRSPTRASHAAAPIVSYHHATGSIASPAQVAFGEGQLTSVLATGQKAGNARRRTTPVQRRVTPKAQETSEPSSLVDGILSSGLADVCREAPKPAKAPKNDRRYLERRERRLSKSSPVDSADTVRTRLAEIEQEAARLEAERQSLQRLASVGG.

The homeobox; TALE-type DNA-binding region spans 110–182 (GAELSATPLP…AARARMGWGD (73 aa)). Disordered stretches follow at residues 333–618 (KQRQ…TGDP), 633–762 (PRDL…GLRP), 832–863 (GQKAGNARRRTTPVQRRVTPKAQETSEPSSLV), and 877–912 (EAPKPAKAPKNDRRYLERRERRLSKSSPVDSADTVR). The span at 337 to 360 (ARREQRRAQKDRMDAQRRAEDRKC) shows a compositional bias: basic and acidic residues. Acidic residues-rich tracts occupy residues 376-400 (ESDEDLDDFYASDDASDDEDDDGED) and 427-469 (ATED…EEEE). Low complexity-rich tracts occupy residues 516–531 (PSSRGSTPTSPVSPSP), 582–611 (VRSRSSPSVSSPPSVSVSLPLPSRGVPSGG), and 657–693 (SRSLTRSPSISSISSACSTSSSGSDTDSLFSVTSDAT). Acidic residues predominate over residues 694–703 (DITEPDEATT). Residues 704–724 (ADETTTQSTSASSSRDTTSQQ) show a composition bias toward low complexity. Residues 877-896 (EAPKPAKAPKNDRRYLERRE) are compositionally biased toward basic and acidic residues.

This sequence belongs to the TALE/M-ATYP homeobox family.

It is found in the nucleus. Its function is as follows. Specifies A-alpha-4 mating-type. May regulate the expression of genes specific to the homokaryotic cell type. In Schizophyllum commune (Split gill fungus), this protein is Mating-type protein A-alpha Z4.